Consider the following 143-residue polypeptide: Dehydrin DHN2 (143 aa).

Residues M1–A10 are compositionally biased toward polar residues. The tract at residues M1 to H143 is disordered. Residues G24–G34 are compositionally biased toward gly residues. The segment covering T35–G46 has biased composition (low complexity). A compositionally biased stretch (basic and acidic residues) spans T51–L61. Over residues R62 to S71 the composition is skewed to low complexity. Residues K86–A101 are compositionally biased toward basic and acidic residues. The span at A109–A123 shows a compositional bias: low complexity. Residues T124–H143 show a composition bias toward basic and acidic residues.

The protein belongs to the plant dehydrin family.

This Hordeum vulgare (Barley) protein is Dehydrin DHN2 (DHN2).